The chain runs to 240 residues: Large ribosomal subunit protein uL2 (240 aa).

Residues 199 to 240 (DHPFGGGGRQHPGRPKSVSRDAAPGRKVGDIASKRTGRGGNE) are disordered. The span at 221-231 (APGRKVGDIAS) shows a compositional bias: basic and acidic residues.

It belongs to the universal ribosomal protein uL2 family. As to quaternary structure, part of the 50S ribosomal subunit. Forms a bridge to the 30S subunit in the 70S ribosome.

One of the primary rRNA binding proteins. Required for association of the 30S and 50S subunits to form the 70S ribosome, for tRNA binding and peptide bond formation. It has been suggested to have peptidyltransferase activity; this is somewhat controversial. Makes several contacts with the 16S rRNA in the 70S ribosome. The polypeptide is Large ribosomal subunit protein uL2 (Halobacterium salinarum (strain ATCC 29341 / DSM 671 / R1)).